Reading from the N-terminus, the 358-residue chain is Heme A synthase (358 aa).

The next 8 helical transmembrane spans lie at leucine 25 to glycine 45, leucine 111 to glycine 131, methionine 141 to serine 161, isoleucine 176 to valine 196, phenylalanine 210 to glycine 230, valine 269 to valine 289, threonine 304 to methionine 324, and alanine 326 to valine 346. Histidine 273 contacts heme. Histidine 334 lines the heme pocket.

It belongs to the COX15/CtaA family. Type 2 subfamily. Interacts with CtaB. Requires heme b as cofactor.

It localises to the cell membrane. It carries out the reaction Fe(II)-heme o + 2 A + H2O = Fe(II)-heme a + 2 AH2. It participates in porphyrin-containing compound metabolism; heme A biosynthesis; heme A from heme O: step 1/1. Functionally, catalyzes the conversion of heme O to heme A by two successive hydroxylations of the methyl group at C8. The first hydroxylation forms heme I, the second hydroxylation results in an unstable dihydroxymethyl group, which spontaneously dehydrates, resulting in the formyl group of heme A. The chain is Heme A synthase from Brucella abortus (strain S19).